A 271-amino-acid chain; its full sequence is Imidazole glycerol phosphate synthase subunit HisF (271 aa).

Residues Asp12 and Asp131 contribute to the active site.

Belongs to the HisA/HisF family. In terms of assembly, heterodimer of HisH and HisF.

Its subcellular location is the cytoplasm. The catalysed reaction is 5-[(5-phospho-1-deoxy-D-ribulos-1-ylimino)methylamino]-1-(5-phospho-beta-D-ribosyl)imidazole-4-carboxamide + L-glutamine = D-erythro-1-(imidazol-4-yl)glycerol 3-phosphate + 5-amino-1-(5-phospho-beta-D-ribosyl)imidazole-4-carboxamide + L-glutamate + H(+). It participates in amino-acid biosynthesis; L-histidine biosynthesis; L-histidine from 5-phospho-alpha-D-ribose 1-diphosphate: step 5/9. Functionally, IGPS catalyzes the conversion of PRFAR and glutamine to IGP, AICAR and glutamate. The HisF subunit catalyzes the cyclization activity that produces IGP and AICAR from PRFAR using the ammonia provided by the HisH subunit. This is Imidazole glycerol phosphate synthase subunit HisF from Methanospirillum hungatei JF-1 (strain ATCC 27890 / DSM 864 / NBRC 100397 / JF-1).